The following is a 674-amino-acid chain: Bacterioopsin transcriptional activator (674 aa).

In terms of domain architecture, Response regulatory spans 19-131 (GVLFAGSDPE…DATAAIADRI (113 aa)). Positions 156-229 (ERRLKEQALD…AEFWTAITED (74 aa)) constitute a PAS domain. The region spanning 230 to 284 (HDTQVVLRNYRRDGSLFWNQVDISPIYDEDGTVSHYVGFQMDVSERMAAQQELQG) is the PAC domain. The GAF domain maps to 285 to 454 (ERQSLDRLLD…NDALTRRTIA (170 aa)). Residues 617 to 668 (LTDRQLTALQKAYVSGYFEWPRRAEGKQLAESMDIVPSTYHQHLQAAKQKLV) form the HTH bat-type domain.

Its function is as follows. Involved in activating bop (bacterioopsin) and brp gene expression at low-oxygen tension, which naturally occurs in stationary phase. The protein is Bacterioopsin transcriptional activator (bat) of Halobacterium salinarum (strain ATCC 700922 / JCM 11081 / NRC-1) (Halobacterium halobium).